We begin with the raw amino-acid sequence, 198 residues long: UPF0548 protein DR_2035 (198 aa).

It belongs to the UPF0548 family.

The protein is UPF0548 protein DR_2035 of Deinococcus radiodurans (strain ATCC 13939 / DSM 20539 / JCM 16871 / CCUG 27074 / LMG 4051 / NBRC 15346 / NCIMB 9279 / VKM B-1422 / R1).